The primary structure comprises 337 residues: Protein RETICULATA-RELATED 3, chloroplastic (337 aa).

Residues 1 to 59 (MAAMAAKLQLSAKSDQSSVRLPRVINLSRDPTTRVSFPRNGSVCSLHTNFSSPHLAKPC) constitute a chloroplast transit peptide. The span at 70 to 89 (NNGGGSGSGGGGGGFGGSGG) shows a compositional bias: gly residues. The tract at residues 70 to 96 (NNGGGSGSGGGGGGFGGSGGEASEESS) is disordered. 2 helical membrane-spanning segments follow: residues 151–171 (FVFSTLVVGSILNFVLMYMLA) and 216–236 (VFASVGLAAGLVGTAISNGLI).

It belongs to the RETICULATA family. Expressed in root meristem, root vasculature, distal region of young leaf primordia, leaf bundle sheath cells, hydathodes and pollen grains.

The protein resides in the plastid. It is found in the chloroplast membrane. Its function is as follows. May play a role in leaf development. Required for leaf mesophyll cell division in the early stages of leaf organogenesis. The protein is Protein RETICULATA-RELATED 3, chloroplastic of Arabidopsis thaliana (Mouse-ear cress).